The sequence spans 385 residues: UDP-N-acetylglucosamine--N-acetylmuramyl-(pentapeptide) pyrophosphoryl-undecaprenol N-acetylglucosamine transferase (385 aa).

UDP-N-acetyl-alpha-D-glucosamine contacts are provided by residues 24-26 (TAG), N143, R180, S214, and Q310.

The protein belongs to the glycosyltransferase 28 family. MurG subfamily.

It is found in the cell membrane. It catalyses the reaction di-trans,octa-cis-undecaprenyl diphospho-N-acetyl-alpha-D-muramoyl-L-alanyl-D-glutamyl-meso-2,6-diaminopimeloyl-D-alanyl-D-alanine + UDP-N-acetyl-alpha-D-glucosamine = di-trans,octa-cis-undecaprenyl diphospho-[N-acetyl-alpha-D-glucosaminyl-(1-&gt;4)]-N-acetyl-alpha-D-muramoyl-L-alanyl-D-glutamyl-meso-2,6-diaminopimeloyl-D-alanyl-D-alanine + UDP + H(+). Its pathway is cell wall biogenesis; peptidoglycan biosynthesis. Its function is as follows. Cell wall formation. Catalyzes the transfer of a GlcNAc subunit on undecaprenyl-pyrophosphoryl-MurNAc-pentapeptide (lipid intermediate I) to form undecaprenyl-pyrophosphoryl-MurNAc-(pentapeptide)GlcNAc (lipid intermediate II). The protein is UDP-N-acetylglucosamine--N-acetylmuramyl-(pentapeptide) pyrophosphoryl-undecaprenol N-acetylglucosamine transferase of Mycolicibacterium smegmatis (strain ATCC 700084 / mc(2)155) (Mycobacterium smegmatis).